The following is a 208-amino-acid chain: Uracil phosphoribosyltransferase (208 aa).

5-phospho-alpha-D-ribose 1-diphosphate-binding positions include Arg-78, Arg-103, and 130-138; that span reads DPMLATGGT. Residues Ile-193 and 198-200 each bind uracil; that span reads GDA. Asp-199 contributes to the 5-phospho-alpha-D-ribose 1-diphosphate binding site.

It belongs to the UPRTase family. Mg(2+) is required as a cofactor.

The enzyme catalyses UMP + diphosphate = 5-phospho-alpha-D-ribose 1-diphosphate + uracil. It participates in pyrimidine metabolism; UMP biosynthesis via salvage pathway; UMP from uracil: step 1/1. With respect to regulation, allosterically activated by GTP. Its function is as follows. Catalyzes the conversion of uracil and 5-phospho-alpha-D-ribose 1-diphosphate (PRPP) to UMP and diphosphate. The protein is Uracil phosphoribosyltransferase of Blochmanniella floridana.